Reading from the N-terminus, the 559-residue chain is Transmembrane E3 ubiquitin-protein ligase FLY2 (559 aa).

The signal sequence occupies residues 1–29 (MNNLGNFGVWGFGFFSLSIWFAVLQQANG). Over 30–259 (LRPIRETARS…TSINVEVYYN (230 aa)) the chain is Lumenal. A helical membrane pass occupies residues 260-280 (KAVNYTLMVTFVSFLQVLLLI). Topologically, residues 281 to 294 (RQMEHSNTQSGAAK) are cytoplasmic. A helical transmembrane segment spans residues 295–315 (VSIVMIGQQAIMDSYLCLLHL). The Lumenal segment spans residues 316–318 (TAG). The chain crosses the membrane as a helical span at residues 319–339 (ILVESLFNAFATAAFFKFVVF). The Cytoplasmic segment spans residues 340–370 (SIFEMRYLLSIWKATRPSTSGEGWETMRREL). Residues 371–391 (SFLYSRFYGILLGGILLMYEF) traverse the membrane as a helical segment. Residues 392-394 (HNY) are Lumenal-facing. A helical transmembrane segment spans residues 395–415 (MRPILLLMYSFWIPQIVANVV). The Cytoplasmic segment spans residues 416-423 (RDSRKPLH). The chain crosses the membrane as a helical span at residues 424–444 (PYYILGMTVTRLAIPLYVFGC). Over 445–458 (PKNFMRVEPSKAWC) the chain is Lumenal. The chain crosses the membrane as a helical span at residues 459-479 (VSLCAFMGFQAGVLLLQHYFG). The Cytoplasmic segment spans residues 480–559 (SRCFVPRKLL…PTCRRPLPPA (80 aa)). The segment at 509–553 (CVICMTTIDLRHRINDCMVTPCEHIFHSGCLQRWMDIKMECPTCR) adopts an RING-type; atypical zinc-finger fold.

Highly expressed in stems. Expressed in root xylem and seed coat.

The protein localises to the endomembrane system. It catalyses the reaction S-ubiquitinyl-[E2 ubiquitin-conjugating enzyme]-L-cysteine + [acceptor protein]-L-lysine = [E2 ubiquitin-conjugating enzyme]-L-cysteine + N(6)-ubiquitinyl-[acceptor protein]-L-lysine.. It functions in the pathway protein modification; protein ubiquitination. Functionally, E3 ubiquitin-protein ligase that may be involved in xylem development. This is Transmembrane E3 ubiquitin-protein ligase FLY2 from Arabidopsis thaliana (Mouse-ear cress).